We begin with the raw amino-acid sequence, 433 residues long: Glutamate-1-semialdehyde 2,1-aminomutase (433 aa).

At Lys271 the chain carries N6-(pyridoxal phosphate)lysine.

This sequence belongs to the class-III pyridoxal-phosphate-dependent aminotransferase family. HemL subfamily. As to quaternary structure, homodimer. Pyridoxal 5'-phosphate serves as cofactor.

Its subcellular location is the cytoplasm. The catalysed reaction is (S)-4-amino-5-oxopentanoate = 5-aminolevulinate. It participates in porphyrin-containing compound metabolism; protoporphyrin-IX biosynthesis; 5-aminolevulinate from L-glutamyl-tRNA(Glu): step 2/2. Its pathway is porphyrin-containing compound metabolism; chlorophyll biosynthesis. This Prochlorococcus marinus (strain MIT 9215) protein is Glutamate-1-semialdehyde 2,1-aminomutase.